A 265-amino-acid polypeptide reads, in one-letter code: 3-methyl-2-oxobutanoate hydroxymethyltransferase (265 aa).

2 residues coordinate Mg(2+): Asp-41 and Asp-80. Residues 41–42 (DS), Asp-80, and Lys-109 each bind 3-methyl-2-oxobutanoate. Glu-111 serves as a coordination point for Mg(2+). Residue Glu-178 is the Proton acceptor of the active site.

This sequence belongs to the PanB family. Homodecamer; pentamer of dimers. Requires Mg(2+) as cofactor.

It is found in the cytoplasm. The catalysed reaction is 3-methyl-2-oxobutanoate + (6R)-5,10-methylene-5,6,7,8-tetrahydrofolate + H2O = 2-dehydropantoate + (6S)-5,6,7,8-tetrahydrofolate. It participates in cofactor biosynthesis; (R)-pantothenate biosynthesis; (R)-pantoate from 3-methyl-2-oxobutanoate: step 1/2. Its function is as follows. Catalyzes the reversible reaction in which hydroxymethyl group from 5,10-methylenetetrahydrofolate is transferred onto alpha-ketoisovalerate to form ketopantoate. In Thermosipho africanus (strain TCF52B), this protein is 3-methyl-2-oxobutanoate hydroxymethyltransferase.